The sequence spans 200 residues: Translation machinery-associated protein 22 (200 aa).

Residues 106–177 (VQIKRVERNK…DVLEWLVEVH (72 aa)) enclose the SUI1 domain.

The protein belongs to the DENR family. As to quaternary structure, interacts with the 40S ribosomal subunit.

The protein localises to the cytoplasm. This is Translation machinery-associated protein 22 (TMA22) from Coccidioides immitis (strain RS) (Valley fever fungus).